We begin with the raw amino-acid sequence, 375 residues long: Queuine tRNA-ribosyltransferase (375 aa).

Asp94 (proton acceptor) is an active-site residue. Residues 94-98 (DSGGF), Asp148, Gln191, and Gly218 each bind substrate. The tract at residues 249–255 (GVGTPED) is RNA binding. Catalysis depends on Asp268, which acts as the Nucleophile. The tract at residues 273 to 277 (TRIAR) is RNA binding; important for wobble base 34 recognition. Zn(2+)-binding residues include Cys306, Cys308, Cys311, and His337.

This sequence belongs to the queuine tRNA-ribosyltransferase family. As to quaternary structure, homodimer. Within each dimer, one monomer is responsible for RNA recognition and catalysis, while the other monomer binds to the replacement base PreQ1. The cofactor is Zn(2+).

It catalyses the reaction 7-aminomethyl-7-carbaguanine + guanosine(34) in tRNA = 7-aminomethyl-7-carbaguanosine(34) in tRNA + guanine. It functions in the pathway tRNA modification; tRNA-queuosine biosynthesis. In terms of biological role, catalyzes the base-exchange of a guanine (G) residue with the queuine precursor 7-aminomethyl-7-deazaguanine (PreQ1) at position 34 (anticodon wobble position) in tRNAs with GU(N) anticodons (tRNA-Asp, -Asn, -His and -Tyr). Catalysis occurs through a double-displacement mechanism. The nucleophile active site attacks the C1' of nucleotide 34 to detach the guanine base from the RNA, forming a covalent enzyme-RNA intermediate. The proton acceptor active site deprotonates the incoming PreQ1, allowing a nucleophilic attack on the C1' of the ribose to form the product. After dissociation, two additional enzymatic reactions on the tRNA convert PreQ1 to queuine (Q), resulting in the hypermodified nucleoside queuosine (7-(((4,5-cis-dihydroxy-2-cyclopenten-1-yl)amino)methyl)-7-deazaguanosine). The polypeptide is Queuine tRNA-ribosyltransferase (Caldanaerobacter subterraneus subsp. tengcongensis (strain DSM 15242 / JCM 11007 / NBRC 100824 / MB4) (Thermoanaerobacter tengcongensis)).